The chain runs to 134 residues: Putative cytochrome c oxidase subunit 6b-like (134 aa).

Positions 1–61 (MSSAQMDPHD…DSGRETDAAV (61 aa)) are disordered. 2 stretches are compositionally biased toward basic and acidic residues: residues 7-19 (DPHDKMRSRDISK) and 44-61 (ATFRAKRGDSGRETDAAV). A CHCH domain is found at 71–114 (TRHCFNRFMQYHKCIEKNGRDANDCNNLRDYVRSICPEELVSKI). The Cx9C motif motif lies at 74–84 (CFNRFMQYHKC). 2 disulfides stabilise this stretch: cysteine 74–cysteine 106 and cysteine 84–cysteine 95. A Cx10C motif motif is present at residues 95-106 (CNNLRDYVRSIC).

It belongs to the cytochrome c oxidase subunit 6B (TC 3.D.4.8) family.

It is found in the mitochondrion. Functionally, this protein is one of the nuclear-coded polypeptide chains of cytochrome c oxidase, the terminal oxidase in mitochondrial electron transport. This protein may be one of the heme-binding subunits of the oxidase. The protein is Putative cytochrome c oxidase subunit 6b-like of Arabidopsis thaliana (Mouse-ear cress).